Here is a 381-residue protein sequence, read N- to C-terminus: PqqA peptide cyclase (381 aa).

The Radical SAM core domain occupies Val-12 to Glu-228. [4Fe-4S] cluster is bound by residues Cys-26, Cys-30, and Cys-33.

This sequence belongs to the radical SAM superfamily. PqqE family. In terms of assembly, interacts with PqqD. The interaction is necessary for activity of PqqE. [4Fe-4S] cluster serves as cofactor.

The catalysed reaction is [PQQ precursor protein] + S-adenosyl-L-methionine = E-Y cross-linked-[PQQ precursor protein] + 5'-deoxyadenosine + L-methionine + H(+). Its pathway is cofactor biosynthesis; pyrroloquinoline quinone biosynthesis. Its function is as follows. Catalyzes the cross-linking of a glutamate residue and a tyrosine residue in the PqqA protein as part of the biosynthesis of pyrroloquinoline quinone (PQQ). In Pseudomonas aeruginosa (strain LESB58), this protein is PqqA peptide cyclase.